The following is a 366-amino-acid chain: Aminomethyltransferase (366 aa).

The protein belongs to the GcvT family. In terms of assembly, the glycine cleavage system is composed of four proteins: P, T, L and H.

It carries out the reaction N(6)-[(R)-S(8)-aminomethyldihydrolipoyl]-L-lysyl-[protein] + (6S)-5,6,7,8-tetrahydrofolate = N(6)-[(R)-dihydrolipoyl]-L-lysyl-[protein] + (6R)-5,10-methylene-5,6,7,8-tetrahydrofolate + NH4(+). The glycine cleavage system catalyzes the degradation of glycine. The chain is Aminomethyltransferase from Bacillus velezensis (strain DSM 23117 / BGSC 10A6 / LMG 26770 / FZB42) (Bacillus amyloliquefaciens subsp. plantarum).